Reading from the N-terminus, the 160-residue chain is Ribosomal RNA large subunit methyltransferase H (160 aa).

S-adenosyl-L-methionine contacts are provided by residues Leu76, Gly108, and 127 to 132; that span reads FGRMTF.

Belongs to the RNA methyltransferase RlmH family. In terms of assembly, homodimer.

The protein localises to the cytoplasm. It catalyses the reaction pseudouridine(1915) in 23S rRNA + S-adenosyl-L-methionine = N(3)-methylpseudouridine(1915) in 23S rRNA + S-adenosyl-L-homocysteine + H(+). In terms of biological role, specifically methylates the pseudouridine at position 1915 (m3Psi1915) in 23S rRNA. This chain is Ribosomal RNA large subunit methyltransferase H, found in Methylocella silvestris (strain DSM 15510 / CIP 108128 / LMG 27833 / NCIMB 13906 / BL2).